A 359-amino-acid chain; its full sequence is Protein mab-21-like 2 (359 aa).

It belongs to the mab-21 family.

Its subcellular location is the nucleus. The protein resides in the cytoplasm. Functionally, required for several aspects of embryonic development including normal development of the eye. This Xenopus tropicalis (Western clawed frog) protein is Protein mab-21-like 2 (mab21l2).